Consider the following 596-residue polypeptide: Elongation factor 4 (596 aa).

The region spanning 2 to 183 (ENIRNFSIIA…AIIKRIPAPK (182 aa)) is the tr-type G domain. Residues 14 to 19 (DHGKST) and 130 to 133 (NKID) each bind GTP.

Belongs to the TRAFAC class translation factor GTPase superfamily. Classic translation factor GTPase family. LepA subfamily.

The protein localises to the cell inner membrane. It carries out the reaction GTP + H2O = GDP + phosphate + H(+). In terms of biological role, required for accurate and efficient protein synthesis under certain stress conditions. May act as a fidelity factor of the translation reaction, by catalyzing a one-codon backward translocation of tRNAs on improperly translocated ribosomes. Back-translocation proceeds from a post-translocation (POST) complex to a pre-translocation (PRE) complex, thus giving elongation factor G a second chance to translocate the tRNAs correctly. Binds to ribosomes in a GTP-dependent manner. The chain is Elongation factor 4 from Campylobacter hominis (strain ATCC BAA-381 / DSM 21671 / CCUG 45161 / LMG 19568 / NCTC 13146 / CH001A).